Reading from the N-terminus, the 1027-residue chain is Transient-receptor-potential-like protein (1027 aa).

The interval 1-22 (MTKEGMLSAAGRRFSRCAPSPR) is disordered. ANK repeat units follow at residues 85–115 (MGRT…RIGN), 117–141 (LLCA…ITRE), and 163–192 (SDIS…SIEK). The next 6 helical transmembrane spans lie at 355–375 (FFLY…YILM), 391–411 (FFYY…ATFE), 473–493 (FLMI…YYIF), 516–536 (VAEA…IYLF), 559–579 (FCFI…QLYW), and 640–660 (MFIM…IAMM). 2 disordered regions span residues 825–929 (KRDI…TYTS) and 1008–1027 (ENVK…NVEK). The segment covering 855–874 (EESEEDDKSDETSSTDEEAD) has biased composition (acidic residues). Residues 910 to 923 (RASEADSKLPDRPL) are compositionally biased toward basic and acidic residues. A compositionally biased stretch (polar residues) spans 1008–1017 (ENVKSPSPAS).

It belongs to the transient receptor (TC 1.A.4) family. STrpC subfamily.

The protein resides in the membrane. Could mediate calcium entry and form a calcium permeant channel. The polypeptide is Transient-receptor-potential-like protein (trp-1) (Caenorhabditis elegans).